Consider the following 949-residue polypeptide: L-fucokinase/L-fucose-1-P guanylyltransferase (949 aa).

The segment at Asp-25 to Ala-191 is fucose-1-phosphate guanylyltransferase. The interval Leu-559–Ser-949 is L-fucokinase.

Belongs to the GHMP kinase family. In terms of assembly, homotetramer. Mn(2+) is required as a cofactor. Requires Mg(2+) as cofactor.

The enzyme catalyses L-fucose + ATP = beta-L-fucose 1-phosphate + ADP + H(+). It catalyses the reaction beta-L-fucose 1-phosphate + GTP + H(+) = GDP-beta-L-fucose + diphosphate. Bifunctional enzyme involved in the salvage pathway of GDP-fucose synthesis. Catalyzes two successive reactions, the ATP-dependent phosphorylation of L-fucose to L-fucose 1-phosphate, and its guanylylation to GDP-L-fucose. GDP-fucose is an important fucose donor in the process of fucosylated oligosaccharides formation. The protein is L-fucokinase/L-fucose-1-P guanylyltransferase of Bacteroides fragilis.